The primary structure comprises 449 residues: Tubulin alpha-2B chain (449 aa).

Q11 is a binding site for GTP. An N6-acetyllysine modification is found at K40. Residues E71, S140, G144, T145, T179, N206, and N228 each contribute to the GTP site. Mg(2+) is bound at residue E71. Residue E254 is part of the active site.

It belongs to the tubulin family. As to quaternary structure, dimer of alpha and beta chains. A typical microtubule is a hollow water-filled tube with an outer diameter of 25 nm and an inner diameter of 15 nM. Alpha-beta heterodimers associate head-to-tail to form protofilaments running lengthwise along the microtubule wall with the beta-tubulin subunit facing the microtubule plus end conferring a structural polarity. Microtubules usually have 13 protofilaments but different protofilament numbers can be found in some organisms and specialized cells. Mg(2+) is required as a cofactor. Acetylation of alpha chains at Lys-40 stabilizes microtubules and affects affinity and processivity of microtubule motors. This modification has a role in multiple cellular functions, ranging from cell motility, cell cycle progression or cell differentiation to intracellular trafficking and signaling.

It is found in the cytoplasm. Its subcellular location is the cytoskeleton. It localises to the spindle. The protein localises to the nucleus. The enzyme catalyses GTP + H2O = GDP + phosphate + H(+). Functionally, tubulin is the major constituent of microtubules, a cylinder consisting of laterally associated linear protofilaments composed of alpha- and beta-tubulin heterodimers. Microtubules grow by the addition of GTP-tubulin dimers to the microtubule end, where a stabilizing cap forms. Below the cap, tubulin dimers are in GDP-bound state, owing to GTPase activity of alpha-tubulin. The protein is Tubulin alpha-2B chain (ALTBE) of Physarum polycephalum (Slime mold).